The primary structure comprises 205 residues: Probable GTP-binding protein EngB (205 aa).

The EngB-type G domain occupies 27–201 (TGIEIAFAGR…AAKLDFWFSP (175 aa)). GTP contacts are provided by residues 35–42 (GRSNAGKS), 62–66 (GRTQL), 80–83 (DLPG), 147–150 (TKAD), and 180–182 (FSA). The Mg(2+) site is built by Ser-42 and Thr-64.

It belongs to the TRAFAC class TrmE-Era-EngA-EngB-Septin-like GTPase superfamily. EngB GTPase family. Mg(2+) serves as cofactor.

Its function is as follows. Necessary for normal cell division and for the maintenance of normal septation. In Haemophilus influenzae (strain 86-028NP), this protein is Probable GTP-binding protein EngB.